The sequence spans 683 residues: Long-chain-fatty-acid--CoA ligase 5 (683 aa).

A helical; Signal-anchor for type III membrane protein transmembrane segment spans residues 12-32; sequence LPTPALICILTFGAAIFLWLI. I32 carries the post-translational modification Phosphoserine. The Cytoplasmic portion of the chain corresponds to 33–683; sequence TRPQPVLPLL…IDSLYEHIQD (651 aa). At K361 the chain carries N6-acetyllysine.

This sequence belongs to the ATP-dependent AMP-binding enzyme family. Mg(2+) is required as a cofactor.

Its subcellular location is the mitochondrion. The protein localises to the endoplasmic reticulum. It localises to the mitochondrion outer membrane. It is found in the endoplasmic reticulum membrane. The protein resides in the cell membrane. It catalyses the reaction a long-chain fatty acid + ATP + CoA = a long-chain fatty acyl-CoA + AMP + diphosphate. It carries out the reaction (5Z,8Z,11Z,14Z)-eicosatetraenoate + ATP + CoA = (5Z,8Z,11Z,14Z)-eicosatetraenoyl-CoA + AMP + diphosphate. The enzyme catalyses hexadecanoate + ATP + CoA = hexadecanoyl-CoA + AMP + diphosphate. The catalysed reaction is (E)-hexadec-2-enoate + ATP + CoA = (2E)-hexadecenoyl-CoA + AMP + diphosphate. It catalyses the reaction 15-hydroxy-(5Z,8Z,11Z,13E)-eicosatetraenoate + ATP + CoA = 15-hydroxy-(5Z,8Z,11Z,13E)-eicosatetraenoyl-CoA + AMP + diphosphate. It carries out the reaction 12-hydroxy-(5Z,8Z,10E,14Z)-eicosatetraenoate + ATP + CoA = 12-hydroxy-(5Z,8Z,10E,14Z)-eicosatetraenoyl-CoA + AMP + diphosphate. The enzyme catalyses 5-hydroxy-(6E,8Z,11Z,14Z)-eicosatetraenoate + ATP + CoA = 5-hydroxy-(6E,8Z,11Z,14Z)-eicosatetraenoyl-CoA + AMP + diphosphate. The catalysed reaction is 14,15-epoxy-(5Z,8Z,11Z)-eicosatrienoate + ATP + CoA = 14,15-epoxy-(5Z,8Z,11Z)-eicosatrienoyl-CoA + AMP + diphosphate. It catalyses the reaction 11,12-epoxy-(5Z,8Z,14Z)-eicosatrienoate + ATP + CoA = 11,12-epoxy-(5Z,8Z,14Z)-eicosatrienoyl-CoA + AMP + diphosphate. It carries out the reaction (9Z)-octadecenoate + ATP + CoA = (9Z)-octadecenoyl-CoA + AMP + diphosphate. Its function is as follows. Catalyzes the conversion of long-chain fatty acids to their active form acyl-CoAs for both synthesis of cellular lipids, and degradation via beta-oxidation. ACSL5 may activate fatty acids from exogenous sources for the synthesis of triacylglycerol destined for intracellular storage. Utilizes a wide range of saturated fatty acids with a preference for C16-C18 unsaturated fatty acids. It was suggested that it may also stimulate fatty acid oxidation. At the villus tip of the crypt-villus axis of the small intestine may sensitize epithelial cells to apoptosis specifically triggered by the death ligand TRAIL. May have a role in the survival of glioma cells. In Homo sapiens (Human), this protein is Long-chain-fatty-acid--CoA ligase 5.